Reading from the N-terminus, the 333-residue chain is tRNA N6-adenosine threonylcarbamoyltransferase (333 aa).

Fe cation-binding residues include His111 and His115. Residues 134 to 138 (LVSGG), Asp167, Gly180, and Asn272 contribute to the substrate site. Asp300 provides a ligand contact to Fe cation.

This sequence belongs to the KAE1 / TsaD family. Fe(2+) is required as a cofactor.

The protein resides in the cytoplasm. It carries out the reaction L-threonylcarbamoyladenylate + adenosine(37) in tRNA = N(6)-L-threonylcarbamoyladenosine(37) in tRNA + AMP + H(+). Required for the formation of a threonylcarbamoyl group on adenosine at position 37 (t(6)A37) in tRNAs that read codons beginning with adenine. Is involved in the transfer of the threonylcarbamoyl moiety of threonylcarbamoyl-AMP (TC-AMP) to the N6 group of A37, together with TsaE and TsaB. TsaD likely plays a direct catalytic role in this reaction. The chain is tRNA N6-adenosine threonylcarbamoyltransferase from Legionella pneumophila (strain Corby).